A 2248-amino-acid polypeptide reads, in one-letter code: Zinc finger protein lin-13 (2248 aa).

A disordered region spans residues 1–189 (MDEFELFQQL…TYASQYSRPP (189 aa)). The segment covering 29–38 (QQANNNQSAP) has biased composition (polar residues). Over residues 54–92 (KQREEEEAQRLADFMQKDMKEPAVKRKRGSEEYKKDPLE) the composition is skewed to basic and acidic residues. The segment covering 145 to 155 (ELDENYMEENE) has biased composition (acidic residues). Residues 440-444 (PLVPV) carry the Required for interaction with hpl-2 isoform a motif. The C2H2-type 1 zinc finger occupies 503 to 525 (HTCIKCGKTFGTEFMLKHHAQSH). A disordered region spans residues 603–665 (KTKKENRNIT…FTSSKQKKKR (63 aa)). Positions 605 to 620 (KKENRNITDSNEKEFS) are enriched in basic and acidic residues. 6 consecutive C2H2-type zinc fingers follow at residues 812–837 (VRCI…SDVH), 959–982 (YSCS…TRFH), 1140–1162 (LMCY…MDDH), 1556–1578 (FKCQ…MRDH), 1601–1623 (WLCR…MAIH), and 1657–1680 (YSCG…SVAH). The segment covering 1859–1877 (PRSSLQTNGSSMGSVTTNG) has biased composition (polar residues). Positions 1859–1900 (PRSSLQTNGSSMGSVTTNGGRVVRPSPPNSMNVTLRRAPPQQ) are disordered.

As to quaternary structure, interacts (via PLVPV motif) with chromobox protein homolog hpl-2 (via chromo (shadow subtype) domain); the interaction is direct and influences localization of hpl-2 to nuclear foci. In terms of tissue distribution, in the L3 stage, expressed in syncytial hypodermal cell 7, body wall muscles, intestinal cells, distal tip cells and many neurons.

The protein resides in the nucleus. In terms of biological role, involved in repression of vulval fate, possibly by a tumor suppressor protein Rb-mediated mechanism. May act in a common pathway with retinoblastoma-like protein homolog lin-35 and hpl-2 to influence the ER stress response in the intestine. Plays a role in recruiting chromobox protein homolog hpl-2 to specific chromatin sites. This Caenorhabditis elegans protein is Zinc finger protein lin-13 (lin-13).